The following is a 745-amino-acid chain: Probable GMP synthase [glutamine-hydrolyzing] (745 aa).

The interval 1-37 is disordered; the sequence is MKRSSSMLDINEDSQHSTNKAPPPKKAPEDRFDSANM. The Glutamine amidotransferase type-1 domain maps to 60-252; the sequence is RIAILDFGAQ…LFKVVGCCGN (193 aa). Cys138 acts as the For GATase activity in catalysis. Residues His226 and Glu228 contribute to the active site. Positions 253 to 461 constitute a GMPS ATP-PPase domain; that stretch reads FTIQNREQSC…LGLPESIVQR (209 aa). 280–286 contacts ATP; that stretch reads SGGVDSA. The substrate site is built by Arg363, Asp563, Gln662, Lys737, and Glu743.

In terms of assembly, homodimer.

It carries out the reaction XMP + L-glutamine + ATP + H2O = GMP + L-glutamate + AMP + diphosphate + 2 H(+). It participates in purine metabolism; GMP biosynthesis; GMP from XMP (L-Gln route): step 1/1. This is Probable GMP synthase [glutamine-hydrolyzing] (gmps-1) from Caenorhabditis elegans.